The chain runs to 743 residues: Catalase-peroxidase (743 aa).

A disordered region spans residues Met1–Arg29. Over residues Asn8–Ala19 the composition is skewed to gly residues. A cross-link (tryptophyl-tyrosyl-methioninium (Trp-Tyr) (with M-248)) is located at residues Trp100–Tyr222. His101 (proton acceptor) is an active-site residue. The tryptophyl-tyrosyl-methioninium (Tyr-Met) (with W-100) cross-link spans Tyr222–Met248. His263 provides a ligand contact to heme b.

The protein belongs to the peroxidase family. Peroxidase/catalase subfamily. Homodimer or homotetramer. Heme b serves as cofactor. Post-translationally, formation of the three residue Trp-Tyr-Met cross-link is important for the catalase, but not the peroxidase activity of the enzyme.

It carries out the reaction H2O2 + AH2 = A + 2 H2O. The catalysed reaction is 2 H2O2 = O2 + 2 H2O. Bifunctional enzyme with both catalase and broad-spectrum peroxidase activity. In Stutzerimonas stutzeri (strain A1501) (Pseudomonas stutzeri), this protein is Catalase-peroxidase.